A 684-amino-acid chain; its full sequence is Threonine--tRNA ligase (684 aa).

The TGS domain maps to 1 to 66 (MTVPATDSCP…DTDAEVVPVA (66 aa)). The interval 261 to 567 (DHRKLGSELD…LTEHYAGAFP (307 aa)) is catalytic. Zn(2+) is bound by residues Cys-366, His-417, and His-544.

Belongs to the class-II aminoacyl-tRNA synthetase family. In terms of assembly, homodimer. Zn(2+) serves as cofactor.

It is found in the cytoplasm. The catalysed reaction is tRNA(Thr) + L-threonine + ATP = L-threonyl-tRNA(Thr) + AMP + diphosphate + H(+). Its function is as follows. Catalyzes the attachment of threonine to tRNA(Thr) in a two-step reaction: L-threonine is first activated by ATP to form Thr-AMP and then transferred to the acceptor end of tRNA(Thr). Also edits incorrectly charged L-seryl-tRNA(Thr). This Mycolicibacterium paratuberculosis (strain ATCC BAA-968 / K-10) (Mycobacterium paratuberculosis) protein is Threonine--tRNA ligase.